Here is a 142-residue protein sequence, read N- to C-terminus: Putative tyrosine phosphatase 123R (142 aa).

The Tyrosine-protein phosphatase domain maps to 2–137 (EPTKIVENLY…LAQFERWLNS (136 aa)). Catalysis depends on Cys-81, which acts as the Phosphocysteine intermediate.

It belongs to the protein-tyrosine phosphatase family.

This Invertebrate iridescent virus 6 (IIV-6) protein is Putative tyrosine phosphatase 123R.